We begin with the raw amino-acid sequence, 340 residues long: Glycerol-3-phosphate dehydrogenase [NAD(P)+] (340 aa).

NADPH is bound by residues Ser14, Phe15, Arg35, and Lys108. Positions 108 and 136 each coordinate sn-glycerol 3-phosphate. NADPH is bound at residue Ala140. Positions 191, 244, 254, 255, and 256 each coordinate sn-glycerol 3-phosphate. Lys191 serves as the catalytic Proton acceptor. Arg255 lines the NADPH pocket. Glu281 lines the NADPH pocket.

Belongs to the NAD-dependent glycerol-3-phosphate dehydrogenase family.

Its subcellular location is the cytoplasm. It catalyses the reaction sn-glycerol 3-phosphate + NAD(+) = dihydroxyacetone phosphate + NADH + H(+). The enzyme catalyses sn-glycerol 3-phosphate + NADP(+) = dihydroxyacetone phosphate + NADPH + H(+). The protein operates within membrane lipid metabolism; glycerophospholipid metabolism. Functionally, catalyzes the reduction of the glycolytic intermediate dihydroxyacetone phosphate (DHAP) to sn-glycerol 3-phosphate (G3P), the key precursor for phospholipid synthesis. The chain is Glycerol-3-phosphate dehydrogenase [NAD(P)+] from Pseudomonas aeruginosa (strain LESB58).